The primary structure comprises 534 residues: GPI transamidase component GPI17 (534 aa).

Over 1–8 (MSNANLRK) the chain is Cytoplasmic. A helical transmembrane segment spans residues 9 to 29 (WVGFCFVAIYLFLGVPLWYKL). At 30–472 (TTVYRASLPI…VQQNFFPQEH (443 aa)) the chain is on the lumenal side. N-linked (GlcNAc...) asparagine glycosylation is found at Asn100, Asn170, Asn228, Asn247, and Asn299. A helical membrane pass occupies residues 473 to 493 (MIAVYLPLLGPISAVMFFGFY). The Cytoplasmic portion of the chain corresponds to 494-534 (NVMKEKNQKSKKNGTEREVAKEKLELKEAQKLHAIDGEDEL).

The protein belongs to the PIGS family. In terms of assembly, forms a complex with CDC91, GPI16, GPI8 and GAA1. Post-translationally, N-glycosylated.

Its subcellular location is the endoplasmic reticulum membrane. The protein operates within glycolipid biosynthesis; glycosylphosphatidylinositol-anchor biosynthesis. Its function is as follows. Component of the GPI transamidase complex. Involved in transfer of GPI to proteins. The polypeptide is GPI transamidase component GPI17 (GPI17) (Saccharomyces cerevisiae (strain ATCC 204508 / S288c) (Baker's yeast)).